We begin with the raw amino-acid sequence, 448 residues long: Phosphoglucosamine mutase (448 aa).

Residue serine 100 is the Phosphoserine intermediate of the active site. The Mg(2+) site is built by serine 100, aspartate 240, aspartate 242, and aspartate 244. Serine 100 carries the post-translational modification Phosphoserine.

The protein belongs to the phosphohexose mutase family. Mg(2+) serves as cofactor. Activated by phosphorylation.

The catalysed reaction is alpha-D-glucosamine 1-phosphate = D-glucosamine 6-phosphate. Its function is as follows. Catalyzes the conversion of glucosamine-6-phosphate to glucosamine-1-phosphate. The protein is Phosphoglucosamine mutase of Clostridium tetani (strain Massachusetts / E88).